A 166-amino-acid chain; its full sequence is uncharacterized protein (166 aa).

This is an uncharacterized protein from Invertebrate iridescent virus 6 (IIV-6).